The sequence spans 407 residues: S-adenosylmethionine synthase (407 aa).

An ATP-binding site is contributed by histidine 21. Position 23 (aspartate 23) interacts with Mg(2+). Glutamate 49 is a K(+) binding site. Residues glutamate 62 and glutamine 105 each contribute to the L-methionine site. Residues 105 to 115 form a flexible loop region; that stretch reads QSQEIGAGVDA. ATP-binding positions include 179 to 181, aspartate 259, 265 to 266, alanine 282, and lysine 286; these read DGK and RK. L-methionine is bound at residue aspartate 259. Residue lysine 290 participates in L-methionine binding.

It belongs to the AdoMet synthase family. Homotetramer; dimer of dimers. Mg(2+) is required as a cofactor. K(+) serves as cofactor.

The protein resides in the cytoplasm. The catalysed reaction is L-methionine + ATP + H2O = S-adenosyl-L-methionine + phosphate + diphosphate. It participates in amino-acid biosynthesis; S-adenosyl-L-methionine biosynthesis; S-adenosyl-L-methionine from L-methionine: step 1/1. Its function is as follows. Catalyzes the formation of S-adenosylmethionine (AdoMet) from methionine and ATP. The overall synthetic reaction is composed of two sequential steps, AdoMet formation and the subsequent tripolyphosphate hydrolysis which occurs prior to release of AdoMet from the enzyme. The protein is S-adenosylmethionine synthase of Corynebacterium aurimucosum (strain ATCC 700975 / DSM 44827 / CIP 107346 / CN-1) (Corynebacterium nigricans).